The primary structure comprises 586 residues: Chaperonin 60 subunit alpha 1, chloroplastic (586 aa).

Residues Met1–Ala46 constitute a chloroplast transit peptide. Ser90 bears the Phosphoserine mark.

This sequence belongs to the chaperonin (HSP60) family. As to quaternary structure, part of the Cpn60 complex composed of 7 alpha and 7 beta subunits. This complex shows ATPase activity. The Cpn60 complex interacts with the Cpn10 complex. Expressed in leaves, stems, siliques and flowers.

It localises to the plastid. The protein resides in the chloroplast. Binds RuBisCO small and large subunits and is implicated in the assembly of the enzyme oligomer. Involved in protein assisted folding. Required for proper chloroplast development. This chain is Chaperonin 60 subunit alpha 1, chloroplastic (CPN60A1), found in Arabidopsis thaliana (Mouse-ear cress).